A 263-amino-acid polypeptide reads, in one-letter code: 3-methyl-2-oxobutanoate hydroxymethyltransferase (263 aa).

Mg(2+) is bound by residues aspartate 45 and aspartate 84. Residues 45–46 (DS), aspartate 84, and lysine 113 contribute to the 3-methyl-2-oxobutanoate site. Mg(2+) is bound at residue glutamate 115. Glutamate 182 (proton acceptor) is an active-site residue.

It belongs to the PanB family. Homodecamer; pentamer of dimers. Mg(2+) is required as a cofactor.

The protein resides in the cytoplasm. The catalysed reaction is 3-methyl-2-oxobutanoate + (6R)-5,10-methylene-5,6,7,8-tetrahydrofolate + H2O = 2-dehydropantoate + (6S)-5,6,7,8-tetrahydrofolate. It participates in cofactor biosynthesis; coenzyme A biosynthesis. Catalyzes the reversible reaction in which hydroxymethyl group from 5,10-methylenetetrahydrofolate is transferred onto alpha-ketoisovalerate to form ketopantoate. The protein is 3-methyl-2-oxobutanoate hydroxymethyltransferase of Ignicoccus hospitalis (strain KIN4/I / DSM 18386 / JCM 14125).